The sequence spans 393 residues: NAD(P)H-quinone oxidoreductase subunit H, chloroplastic (393 aa).

Belongs to the complex I 49 kDa subunit family. In terms of assembly, NDH is composed of at least 16 different subunits, 5 of which are encoded in the nucleus.

The protein resides in the plastid. Its subcellular location is the chloroplast thylakoid membrane. The enzyme catalyses a plastoquinone + NADH + (n+1) H(+)(in) = a plastoquinol + NAD(+) + n H(+)(out). It catalyses the reaction a plastoquinone + NADPH + (n+1) H(+)(in) = a plastoquinol + NADP(+) + n H(+)(out). NDH shuttles electrons from NAD(P)H:plastoquinone, via FMN and iron-sulfur (Fe-S) centers, to quinones in the photosynthetic chain and possibly in a chloroplast respiratory chain. The immediate electron acceptor for the enzyme in this species is believed to be plastoquinone. Couples the redox reaction to proton translocation, and thus conserves the redox energy in a proton gradient. The polypeptide is NAD(P)H-quinone oxidoreductase subunit H, chloroplastic (Lobularia maritima (Sweet alyssum)).